The sequence spans 216 residues: Pyridoxine/pyridoxamine 5'-phosphate oxidase (216 aa).

FMN is bound by residues 63-68 (RMVLMK), 78-79 (YS), K85, and Q107. K68 contacts substrate. Y125 and R129 together coordinate substrate. FMN is bound by residues 142–143 (QS) and W187. 193-195 (RLH) serves as a coordination point for substrate. FMN is bound at residue R197.

Belongs to the pyridoxamine 5'-phosphate oxidase family. Homodimer. It depends on FMN as a cofactor.

The catalysed reaction is pyridoxamine 5'-phosphate + O2 + H2O = pyridoxal 5'-phosphate + H2O2 + NH4(+). It carries out the reaction pyridoxine 5'-phosphate + O2 = pyridoxal 5'-phosphate + H2O2. It participates in cofactor metabolism; pyridoxal 5'-phosphate salvage; pyridoxal 5'-phosphate from pyridoxamine 5'-phosphate: step 1/1. It functions in the pathway cofactor metabolism; pyridoxal 5'-phosphate salvage; pyridoxal 5'-phosphate from pyridoxine 5'-phosphate: step 1/1. Functionally, catalyzes the oxidation of either pyridoxine 5'-phosphate (PNP) or pyridoxamine 5'-phosphate (PMP) into pyridoxal 5'-phosphate (PLP). This chain is Pyridoxine/pyridoxamine 5'-phosphate oxidase, found in Bradyrhizobium sp. (strain ORS 278).